A 266-amino-acid polypeptide reads, in one-letter code: 22 kDa alpha-zein 8 (266 aa).

Positions 1-21 (MATKILALLALLALFVSATNA) are cleaved as a signal peptide.

This sequence belongs to the zein family.

In terms of biological role, zeins are major seed storage proteins. The sequence is that of 22 kDa alpha-zein 8 from Zea mays (Maize).